An 84-amino-acid chain; its full sequence is Large ribosomal subunit protein bL27 (84 aa).

The disordered stretch occupies residues 1–25; the sequence is MAHKKGQGSTQNNRDSAGRRLGVKK.

The protein belongs to the bacterial ribosomal protein bL27 family.

The protein is Large ribosomal subunit protein bL27 of Sulfurovum sp. (strain NBC37-1).